The chain runs to 68 residues: Probable Sec-independent protein translocase protein TatE (68 aa).

A helical transmembrane segment spans residues 1–21 (MGEISITKLLVVAALIILVFG). Residues 43 to 68 (MNEDDDSAKKTTAEEEAPAQKLSHKE) form a disordered region.

This sequence belongs to the TatA/E family. TatE subfamily.

The protein localises to the cell inner membrane. Functionally, part of the twin-arginine translocation (Tat) system that transports large folded proteins containing a characteristic twin-arginine motif in their signal peptide across membranes. TatE shares overlapping functions with TatA. The polypeptide is Probable Sec-independent protein translocase protein TatE (Klebsiella pneumoniae subsp. pneumoniae (strain ATCC 700721 / MGH 78578)).